The chain runs to 130 residues: Protein ApaG (130 aa).

An ApaG domain is found at 3–127; sequence RALTRDIEVT…FSLDSPGLMR (125 aa).

In Agrobacterium fabrum (strain C58 / ATCC 33970) (Agrobacterium tumefaciens (strain C58)), this protein is Protein ApaG.